Reading from the N-terminus, the 547-residue chain is Chaperonin GroEL (547 aa).

ATP contacts are provided by residues T30–P33, K51, D87–T91, G415, and D496.

The protein belongs to the chaperonin (HSP60) family. In terms of assembly, forms a cylinder of 14 subunits composed of two heptameric rings stacked back-to-back. Interacts with the co-chaperonin GroES.

It localises to the cytoplasm. The enzyme catalyses ATP + H2O + a folded polypeptide = ADP + phosphate + an unfolded polypeptide.. Together with its co-chaperonin GroES, plays an essential role in assisting protein folding. The GroEL-GroES system forms a nano-cage that allows encapsulation of the non-native substrate proteins and provides a physical environment optimized to promote and accelerate protein folding. The chain is Chaperonin GroEL from Chlorobium phaeobacteroides (strain DSM 266 / SMG 266 / 2430).